The chain runs to 334 residues: Beta-hexosaminidase (334 aa).

Residues aspartate 60, arginine 68, arginine 133, and 163–164 contribute to the substrate site; that span reads KH. Catalysis depends on histidine 176, which acts as the Proton donor/acceptor. Aspartate 247 acts as the Nucleophile in catalysis.

Belongs to the glycosyl hydrolase 3 family. NagZ subfamily.

Its subcellular location is the cytoplasm. It catalyses the reaction Hydrolysis of terminal non-reducing N-acetyl-D-hexosamine residues in N-acetyl-beta-D-hexosaminides.. Its pathway is cell wall biogenesis; peptidoglycan recycling. Plays a role in peptidoglycan recycling by cleaving the terminal beta-1,4-linked N-acetylglucosamine (GlcNAc) from peptide-linked peptidoglycan fragments, giving rise to free GlcNAc, anhydro-N-acetylmuramic acid and anhydro-N-acetylmuramic acid-linked peptides. This is Beta-hexosaminidase from Xanthomonas axonopodis pv. citri (strain 306).